The primary structure comprises 417 residues: D-inositol 3-phosphate glycosyltransferase (417 aa).

Position 15 (H15) interacts with 1D-myo-inositol 3-phosphate. Residues 21–22 (QP) and G29 each bind UDP-N-acetyl-alpha-D-glucosamine. Residues 26-31 (DAGGMN), K84, Y117, T141, and R161 each bind 1D-myo-inositol 3-phosphate. Positions 241, 246, and 299 each coordinate UDP-N-acetyl-alpha-D-glucosamine. Residues Y308, R309, and A311 each contribute to the Mg(2+) site. The UDP-N-acetyl-alpha-D-glucosamine site is built by E321 and E329. T335 contacts Mg(2+).

This sequence belongs to the glycosyltransferase group 1 family. MshA subfamily. As to quaternary structure, homodimer.

It catalyses the reaction 1D-myo-inositol 3-phosphate + UDP-N-acetyl-alpha-D-glucosamine = 1D-myo-inositol 2-acetamido-2-deoxy-alpha-D-glucopyranoside 3-phosphate + UDP + H(+). Its function is as follows. Catalyzes the transfer of a N-acetyl-glucosamine moiety to 1D-myo-inositol 3-phosphate to produce 1D-myo-inositol 2-acetamido-2-deoxy-glucopyranoside 3-phosphate in the mycothiol biosynthesis pathway. The polypeptide is D-inositol 3-phosphate glycosyltransferase (Xylanimonas cellulosilytica (strain DSM 15894 / JCM 12276 / CECT 5975 / KCTC 9989 / LMG 20990 / NBRC 107835 / XIL07)).